The sequence spans 240 residues: Uridylate kinase (240 aa).

Residue lysine 13–glycine 16 participates in ATP binding. An involved in allosteric activation by GTP region spans residues glycine 21–glycine 26. Glycine 55 is a binding site for UMP. Residues glycine 56 and arginine 60 each coordinate ATP. UMP-binding positions include aspartate 75 and isoleucine 136–threonine 143. Residues asparagine 164, tyrosine 170, and aspartate 173 each contribute to the ATP site.

This sequence belongs to the UMP kinase family. As to quaternary structure, homohexamer.

The protein resides in the cytoplasm. It catalyses the reaction UMP + ATP = UDP + ADP. Its pathway is pyrimidine metabolism; CTP biosynthesis via de novo pathway; UDP from UMP (UMPK route): step 1/1. With respect to regulation, allosterically activated by GTP. Inhibited by UTP. Its function is as follows. Catalyzes the reversible phosphorylation of UMP to UDP. The sequence is that of Uridylate kinase from Staphylococcus aureus (strain Newman).